The following is a 469-amino-acid chain: Phosphoenolpyruvate carboxylase (469 aa).

It belongs to the PEPCase type 2 family. As to quaternary structure, homotetramer. Requires Mg(2+) as cofactor.

It carries out the reaction oxaloacetate + phosphate = phosphoenolpyruvate + hydrogencarbonate. Functionally, catalyzes the irreversible beta-carboxylation of phosphoenolpyruvate (PEP) to form oxaloacetate (OAA), a four-carbon dicarboxylic acid source for the tricarboxylic acid cycle. The sequence is that of Phosphoenolpyruvate carboxylase from Pyrococcus abyssi (strain GE5 / Orsay).